A 174-amino-acid polypeptide reads, in one-letter code: Ribosome maturation factor RimP (174 aa).

Belongs to the RimP family.

The protein localises to the cytoplasm. Required for maturation of 30S ribosomal subunits. The protein is Ribosome maturation factor RimP of Bdellovibrio bacteriovorus (strain ATCC 15356 / DSM 50701 / NCIMB 9529 / HD100).